The following is a 417-amino-acid chain: Valine--pyruvate aminotransferase (417 aa).

Lys-249 carries the post-translational modification N6-(pyridoxal phosphate)lysine.

Belongs to the class-I pyridoxal-phosphate-dependent aminotransferase family. In terms of assembly, homodimer. Pyridoxal 5'-phosphate is required as a cofactor.

It localises to the cytoplasm. The catalysed reaction is L-valine + pyruvate = 3-methyl-2-oxobutanoate + L-alanine. Its function is as follows. Involved in the biosynthesis of alanine. The protein is Valine--pyruvate aminotransferase (avtA) of Escherichia coli (strain K12).